A 216-amino-acid polypeptide reads, in one-letter code: Octanoyltransferase (216 aa).

The BPL/LPL catalytic domain maps to 30–216 (GEAGEAVWLL…KRQFFEVFGA (187 aa)). Residues 69-76 (RGGQYTYH), 149-151 (AIG), and 162-164 (GLS) contribute to the substrate site. Catalysis depends on Cys180, which acts as the Acyl-thioester intermediate.

It belongs to the LipB family.

The protein localises to the cytoplasm. It catalyses the reaction octanoyl-[ACP] + L-lysyl-[protein] = N(6)-octanoyl-L-lysyl-[protein] + holo-[ACP] + H(+). Its pathway is protein modification; protein lipoylation via endogenous pathway; protein N(6)-(lipoyl)lysine from octanoyl-[acyl-carrier-protein]: step 1/2. Catalyzes the transfer of endogenously produced octanoic acid from octanoyl-acyl-carrier-protein onto the lipoyl domains of lipoate-dependent enzymes. Lipoyl-ACP can also act as a substrate although octanoyl-ACP is likely to be the physiological substrate. The chain is Octanoyltransferase from Jannaschia sp. (strain CCS1).